Reading from the N-terminus, the 535-residue chain is Bifunctional purine biosynthesis protein PurH (535 aa).

The region spanning 6–151 is the MGS-like domain; it reads TRLPVRRALI…KNHKDVAIVV (146 aa).

The protein belongs to the PurH family.

The catalysed reaction is (6R)-10-formyltetrahydrofolate + 5-amino-1-(5-phospho-beta-D-ribosyl)imidazole-4-carboxamide = 5-formamido-1-(5-phospho-D-ribosyl)imidazole-4-carboxamide + (6S)-5,6,7,8-tetrahydrofolate. It catalyses the reaction IMP + H2O = 5-formamido-1-(5-phospho-D-ribosyl)imidazole-4-carboxamide. Its pathway is purine metabolism; IMP biosynthesis via de novo pathway; 5-formamido-1-(5-phospho-D-ribosyl)imidazole-4-carboxamide from 5-amino-1-(5-phospho-D-ribosyl)imidazole-4-carboxamide (10-formyl THF route): step 1/1. The protein operates within purine metabolism; IMP biosynthesis via de novo pathway; IMP from 5-formamido-1-(5-phospho-D-ribosyl)imidazole-4-carboxamide: step 1/1. This Ectopseudomonas mendocina (strain ymp) (Pseudomonas mendocina) protein is Bifunctional purine biosynthesis protein PurH.